A 477-amino-acid chain; its full sequence is Cysteine--tRNA ligase (477 aa).

Cys28 is a Zn(2+) binding site. The 'HIGH' region motif lies at 30-40 (PTVYDYAHIGN). The Zn(2+) site is built by Cys213, His238, and Glu242. The 'KMSKS' region motif lies at 270-274 (KMSKS). Lys273 lines the ATP pocket.

It belongs to the class-I aminoacyl-tRNA synthetase family. In terms of assembly, monomer. The cofactor is Zn(2+).

It is found in the cytoplasm. It carries out the reaction tRNA(Cys) + L-cysteine + ATP = L-cysteinyl-tRNA(Cys) + AMP + diphosphate. The protein is Cysteine--tRNA ligase (cysS) of Chlamydia trachomatis serovar D (strain ATCC VR-885 / DSM 19411 / UW-3/Cx).